We begin with the raw amino-acid sequence, 474 residues long: Bifunctional protein HldE (474 aa).

The interval 1–318 is ribokinase; sequence MKMTLPDFHC…ENAIRGRAET (318 aa). 195–198 provides a ligand contact to ATP; sequence NLSE. The active site involves Asp264. A cytidylyltransferase region spans residues 344–474; sequence MTNGCFDILH…TNIIKAIKNQ (131 aa).

In the N-terminal section; belongs to the carbohydrate kinase PfkB family. The protein in the C-terminal section; belongs to the cytidylyltransferase family. Homodimer.

The catalysed reaction is D-glycero-beta-D-manno-heptose 7-phosphate + ATP = D-glycero-beta-D-manno-heptose 1,7-bisphosphate + ADP + H(+). It carries out the reaction D-glycero-beta-D-manno-heptose 1-phosphate + ATP + H(+) = ADP-D-glycero-beta-D-manno-heptose + diphosphate. It functions in the pathway nucleotide-sugar biosynthesis; ADP-L-glycero-beta-D-manno-heptose biosynthesis; ADP-L-glycero-beta-D-manno-heptose from D-glycero-beta-D-manno-heptose 7-phosphate: step 1/4. It participates in nucleotide-sugar biosynthesis; ADP-L-glycero-beta-D-manno-heptose biosynthesis; ADP-L-glycero-beta-D-manno-heptose from D-glycero-beta-D-manno-heptose 7-phosphate: step 3/4. The protein operates within bacterial outer membrane biogenesis; LPS core biosynthesis. Functionally, catalyzes the phosphorylation of D-glycero-D-manno-heptose 7-phosphate at the C-1 position to selectively form D-glycero-beta-D-manno-heptose-1,7-bisphosphate. Catalyzes the ADP transfer from ATP to D-glycero-beta-D-manno-heptose 1-phosphate, yielding ADP-D-glycero-beta-D-manno-heptose. This chain is Bifunctional protein HldE, found in Photorhabdus laumondii subsp. laumondii (strain DSM 15139 / CIP 105565 / TT01) (Photorhabdus luminescens subsp. laumondii).